The chain runs to 314 residues: Lysophospholipase D GDPD1 (314 aa).

Topologically, residues 1–3 (MSS) are extracellular. Residues 4-24 (TAAFYLLSTLGGYLVTSFLLL) form a helical membrane-spanning segment. Over 25–195 (KYPTLLHQRK…VEKCYKENSD (171 aa)) the chain is Cytoplasmic. Residues 40 to 309 (SKHISHRGGA…DYPTKLRDFL (270 aa)) form the GP-PDE domain. A divalent metal cation contacts are provided by glutamate 72, aspartate 74, and histidine 87. A helical membrane pass occupies residues 196–216 (IPILFSLQRVLLILGLFFTGL). Topologically, residues 217–314 (LPFVPIREQF…LRDFLHNFSA (98 aa)) are extracellular.

The protein belongs to the glycerophosphoryl diester phosphodiesterase family. Widely expressed with high expression level in testis.

It is found in the cytoplasm. The protein localises to the membrane. It localises to the perinuclear region. The protein resides in the endoplasmic reticulum. The enzyme catalyses a 1-O-alkyl-sn-glycero-3-phosphocholine + H2O = a 1-O-alkyl-sn-glycero-3-phosphate + choline + H(+). It carries out the reaction 1-hexadecanoyl-sn-glycero-3-phosphocholine + H2O = 1-hexadecanoyl-sn-glycero-3-phosphate + choline + H(+). The catalysed reaction is N-hexadecanoyl-sn-glycero-3-phosphoethanolamine + H2O = N-hexadecanoylethanolamine + sn-glycerol 3-phosphate + H(+). It catalyses the reaction N-(5Z,8Z,11Z,14Z-eicosatetraenoyl)-1-(9Z-octadecenoyl)-sn-glycero-3-phosphoethanolamine + H2O = N-(5Z,8Z,11Z,14Z-eicosatetraenoyl)-ethanolamine + 1-(9Z-octadecenoyl)-sn-glycero-3-phosphate + H(+). The enzyme catalyses N,1-di-(9Z-octadecenoyl)-sn-glycero-3-phosphoethanolamine + H2O = N-(9Z-octadecenoyl) ethanolamine + 1-(9Z-octadecenoyl)-sn-glycero-3-phosphate + H(+). It carries out the reaction N-hexadecanoyl-1-(9Z-octadecenoyl)-sn-glycero-3-phosphoethanolamine + H2O = N-hexadecanoylethanolamine + 1-(9Z-octadecenoyl)-sn-glycero-3-phosphate + H(+). The catalysed reaction is 1-O-(1Z-octadecenyl)-sn-glycero-3-phospho-N-hexadecanoyl-ethanolamine + H2O = 1-O-(1Z-octadecenyl)-sn-glycero-3-phosphate + N-hexadecanoylethanolamine + H(+). It catalyses the reaction 1-hexadecanoyl-sn-glycero-3-phosphoethanolamine + H2O = 1-hexadecanoyl-sn-glycero-3-phosphate + ethanolamine + H(+). The enzyme catalyses 1-O-hexadecyl-sn-glycero-3-phosphocholine + H2O = 1-O-hexadecyl-sn-glycero-3-phosphate + choline + H(+). It carries out the reaction 1-(9Z-octadecenoyl)-sn-glycero-3-phosphocholine + H2O = 1-(9Z-octadecenoyl)-sn-glycero-3-phosphate + choline + H(+). The catalysed reaction is N,1-dihexadecanoyl-sn-glycero-3-phosphoethanolamine + H2O = N-hexadecanoylethanolamine + 1-hexadecanoyl-sn-glycero-3-phosphate + H(+). It catalyses the reaction 1-O-(1Z-octadecenyl)-sn-glycero-3-phospho-(N-5Z,8Z,11Z,14Z-eicosatetraenoyl)-ethanolamine + H2O = 1-O-(1Z-octadecenyl)-sn-glycero-3-phosphate + N-(5Z,8Z,11Z,14Z-eicosatetraenoyl)-ethanolamine + H(+). The enzyme catalyses 1-O-(1Z-octadecenyl)-sn-glycero-3-phospho-(N-9Z-octadecenoyl)-ethanolamine + H2O = 1-O-(1Z-octadecenyl)-sn-glycero-3-phosphate + N-(9Z-octadecenoyl) ethanolamine + H(+). Lysophospholipase D activity is increased by magnesium and manganese and inhibited by calcium in a concentration dependent manner. Loss of lysophospholipase D activity by addition of EDTA. Functionally, hydrolyzes lysoglycerophospholipids to produce lysophosphatidic acid (LPA) and the corresponding amines. Shows a preference for 1-O-alkyl-sn-glycero-3-phosphocholine (lyso-PAF), lysophosphatidylethanolamine (lyso-PE) and lysophosphatidylcholine (lyso-PC). May be involved in bioactive N-acylethanolamine biosynthesis from both N-acyl-lysoplasmenylethanolamin (N-acyl-lysoPlsEt) and N-acyl-lysophosphatidylethanolamin (N-acyl-lysoPE). In addition, hydrolyzes glycerophospho-N-acylethanolamine to N-acylethanolamine. Does not display glycerophosphodiester phosphodiesterase activity, since it cannot hydrolyze either glycerophosphoinositol or glycerophosphocholine. The protein is Lysophospholipase D GDPD1 of Homo sapiens (Human).